A 260-amino-acid polypeptide reads, in one-letter code: UPF0294 protein YE0917 (260 aa).

Belongs to the UPF0294 family.

It localises to the cytoplasm. The sequence is that of UPF0294 protein YE0917 from Yersinia enterocolitica serotype O:8 / biotype 1B (strain NCTC 13174 / 8081).